The primary structure comprises 64 residues: Small ribosomal subunit protein bS21 (64 aa).

The disordered stretch occupies residues 26–64 (DGILSEARRRTRFERPPTRRKRKDAAKRRLAIKAARKAT). Positions 43–64 (TRRKRKDAAKRRLAIKAARKAT) are enriched in basic residues.

The protein belongs to the bacterial ribosomal protein bS21 family.

In Dehalococcoides mccartyi (strain ATCC BAA-2100 / JCM 16839 / KCTC 5957 / BAV1), this protein is Small ribosomal subunit protein bS21.